Here is a 339-residue protein sequence, read N- to C-terminus: Small ribosomal subunit biogenesis GTPase RsgA (339 aa).

The CP-type G domain maps to 111–271 (MRGLLKPVAA…LIDSPGIREF (161 aa)). GTP-binding positions include 159 to 162 (NKAD) and 213 to 221 (GQSGVGKSS). Zn(2+) contacts are provided by Cys-295, Cys-300, His-302, and Cys-308.

The protein belongs to the TRAFAC class YlqF/YawG GTPase family. RsgA subfamily. Monomer. Associates with 30S ribosomal subunit, binds 16S rRNA. Zn(2+) serves as cofactor.

The protein resides in the cytoplasm. One of several proteins that assist in the late maturation steps of the functional core of the 30S ribosomal subunit. Helps release RbfA from mature subunits. May play a role in the assembly of ribosomal proteins into the subunit. Circularly permuted GTPase that catalyzes slow GTP hydrolysis, GTPase activity is stimulated by the 30S ribosomal subunit. The protein is Small ribosomal subunit biogenesis GTPase RsgA of Pseudomonas aeruginosa (strain LESB58).